A 213-amino-acid polypeptide reads, in one-letter code: Imidazole glycerol phosphate synthase subunit HisH (213 aa).

The region spanning 3 to 213 is the Glutamine amidotransferase type-1 domain; the sequence is MIGVIDYGMG…VGIVTGRENG (211 aa). Catalysis depends on Cys81, which acts as the Nucleophile. Active-site residues include His188 and Glu190.

As to quaternary structure, heterodimer of HisH and HisF.

Its subcellular location is the cytoplasm. It catalyses the reaction 5-[(5-phospho-1-deoxy-D-ribulos-1-ylimino)methylamino]-1-(5-phospho-beta-D-ribosyl)imidazole-4-carboxamide + L-glutamine = D-erythro-1-(imidazol-4-yl)glycerol 3-phosphate + 5-amino-1-(5-phospho-beta-D-ribosyl)imidazole-4-carboxamide + L-glutamate + H(+). The catalysed reaction is L-glutamine + H2O = L-glutamate + NH4(+). It functions in the pathway amino-acid biosynthesis; L-histidine biosynthesis; L-histidine from 5-phospho-alpha-D-ribose 1-diphosphate: step 5/9. In terms of biological role, IGPS catalyzes the conversion of PRFAR and glutamine to IGP, AICAR and glutamate. The HisH subunit catalyzes the hydrolysis of glutamine to glutamate and ammonia as part of the synthesis of IGP and AICAR. The resulting ammonia molecule is channeled to the active site of HisF. The protein is Imidazole glycerol phosphate synthase subunit HisH of Geobacillus thermodenitrificans (strain NG80-2).